We begin with the raw amino-acid sequence, 2234 residues long: RNA-directed RNA polymerase L (2234 aa).

The endonuclease stretch occupies residues 26 to 283; the sequence is ITVVTSQTEM…INLSDEKLSC (258 aa). The Mn(2+) site is built by Glu-51, Asp-89, and Glu-102. Lys-115 is a catalytic residue. A compositionally biased stretch (basic and acidic residues) spans 879–891; the sequence is KRDDHMKDSEDSK. Disordered stretches follow at residues 879–898 and 927–949; these read KRDDHMKDSEDSKQNLSSDL and KLKEKTEARQSSSGSSLKNQQKR. The segment covering 935-945 has biased composition (polar residues); it reads RQSSSGSSLKN. The RdRp catalytic domain occupies 1184–1383; sequence MEMKMSVNLG…FISSKFNKFV (200 aa). A Mg(2+)-binding site is contributed by Asp-1342.

The protein belongs to the Bunyavirales RNA polymerase family. As to quaternary structure, homomultimer; the oligomeric structure is essential for the polymerase activity. Interacts with nucleoprotein N. Interacts with protein Z; this interaction inhibits viral transcription and replication, Z partially blocks the product exit tunnel for the releasing nascent RNA product. Mn(2+) serves as cofactor. Mg(2+) is required as a cofactor.

It is found in the virion. The protein resides in the host cytoplasm. It catalyses the reaction RNA(n) + a ribonucleoside 5'-triphosphate = RNA(n+1) + diphosphate. Its function is as follows. RNA-dependent RNA polymerase, which is responsible for the replication and transcription of the viral RNA genome using antigenomic RNA as an intermediate. During transcription, synthesizes subgenomic RNAs and assures their capping by a cap-snatching mechanism, which involves the endonuclease activity cleaving the host capped pre-mRNAs. These short capped RNAs are then used as primers for viral transcription. The 3'-end of subgenomic mRNAs molecules are heterogeneous and not polyadenylated. The replicase function is to direct synthesis of antigenomic and genomic RNA which are encapsidated and non capped. As a consequence of the use of the same enzyme for both transcription and replication, these mechanisms need to be well coordinated. These processes may be regulated by proteins N and Z in a dose-dependent manner. Z protein inhibits the viral polymerase L und thus the viral transcription and RNA synthesis. The chain is RNA-directed RNA polymerase L from Bolomys (OLVV).